The primary structure comprises 597 residues: Cysteine/serine-rich nuclear protein 3 (597 aa).

2 disordered regions span residues 22–64 and 348–407; these read EDVD…TPSS and CQGD…GFVE. Residues 42 to 52 are compositionally biased toward low complexity; it reads SSESADSGDSV. Residues 53 to 64 are compositionally biased toward polar residues; that stretch reads NPSTSNHFTPSS. Residues 348–359 are compositionally biased toward acidic residues; the sequence is CQGDEEEEEEDG. The segment covering 361–376 has biased composition (polar residues); sequence SFCSGATDSSTQSLAP. Residues 378 to 401 show a composition bias toward acidic residues; the sequence is ESDEEEEEEEEEEEEEEEDDDDDK.

Belongs to the AXUD1 family. As to expression, detected only in the brain of 15 dpc, 18 dpc, newborn and P6 mice (at protein level).

The protein localises to the nucleus. Binds to the consensus sequence 5'-AGAGTG-3' and has transcriptional activator activity. Plays a role in apoptosis. The protein is Cysteine/serine-rich nuclear protein 3 (Csrnp3) of Mus musculus (Mouse).